The chain runs to 299 residues: ATP phosphoribosyltransferase (299 aa).

This sequence belongs to the ATP phosphoribosyltransferase family. Long subfamily. Mg(2+) serves as cofactor.

Its subcellular location is the cytoplasm. The enzyme catalyses 1-(5-phospho-beta-D-ribosyl)-ATP + diphosphate = 5-phospho-alpha-D-ribose 1-diphosphate + ATP. The protein operates within amino-acid biosynthesis; L-histidine biosynthesis; L-histidine from 5-phospho-alpha-D-ribose 1-diphosphate: step 1/9. Its activity is regulated as follows. Feedback inhibited by histidine. Catalyzes the condensation of ATP and 5-phosphoribose 1-diphosphate to form N'-(5'-phosphoribosyl)-ATP (PR-ATP). Has a crucial role in the pathway because the rate of histidine biosynthesis seems to be controlled primarily by regulation of HisG enzymatic activity. The chain is ATP phosphoribosyltransferase from Shewanella denitrificans (strain OS217 / ATCC BAA-1090 / DSM 15013).